The sequence spans 79 residues: MAKIGVENSLTDVQQALQQQGHEVVTINSEHDAQGCDCCVVTGQDSNMMGIADTSIKGSVINAHGLTTDEICQQVESRI.

This sequence belongs to the UPF0180 family.

The sequence is that of UPF0180 protein BCE_1513 from Bacillus cereus (strain ATCC 10987 / NRS 248).